A 106-amino-acid polypeptide reads, in one-letter code: UPF0145 protein VCM66_A0911 (106 aa).

This sequence belongs to the UPF0145 family.

The sequence is that of UPF0145 protein VCM66_A0911 from Vibrio cholerae serotype O1 (strain M66-2).